We begin with the raw amino-acid sequence, 1651 residues long: Roundabout homolog 1 (1651 aa).

Residues 1–25 form the signal peptide; sequence MKWKHVPFLVMISLLSLSPNHLFLA. Residues 26–897 are Extracellular-facing; it reads QLIPDPEDVE…QQISDVVKQP (872 aa). A disordered region spans residues 33-57; sequence DVERGNDHGTPIPTSDNDDNSLGYT. Polar residues predominate over residues 44–56; sequence IPTSDNDDNSLGY. 5 consecutive Ig-like C2-type domains span residues 68-164, 170-257, 262-346, 351-446, and 455-541; these read PRIV…ASLE, DDFR…AELT, PSFV…ATLT, PHFV…LEVT, and PVIR…AYIE. Cysteines 89 and 147 form a disulfide. Residue Asn-160 is glycosylated (N-linked (GlcNAc...) asparagine). 3 cysteine pairs are disulfide-bonded: Cys-191/Cys-240, Cys-283/Cys-330, and Cys-372/Cys-428. N-linked (GlcNAc...) asparagine glycosylation is present at Asn-463. Cys-476 and Cys-525 form a disulfide bridge. 3 consecutive Fibronectin type-III domains span residues 563–657, 676–773, and 778–874; these read APSK…TQDV, AVLH…TLEE, and PPQG…LDAH. N-linked (GlcNAc...) asparagine glycans are attached at residues Asn-790, Asn-820, and Asn-827. A helical transmembrane segment spans residues 898–918; that stretch reads AFIAGIGAACWIILMVFSIWL. The Cytoplasmic portion of the chain corresponds to 919–1651; sequence YRHRKKRNGL…NNEELEETES (733 aa). Phosphoserine is present on Ser-940. The residue at position 948 (Thr-948) is a Phosphothreonine. A Phosphotyrosine; by ABL; in vitro modification is found at Tyr-1038. Position 1055 is a phosphoserine (Ser-1055). Tyr-1073 and Tyr-1114 each carry phosphotyrosine; by ABL; in vitro. Disordered regions lie at residues 1124-1202, 1224-1337, 1352-1397, and 1420-1651; these read KDYR…SEEY, YLQQ…ADME, EQTP…DGSF, and RRQM…ETES. The span at 1137–1146 shows a compositional bias: polar residues; that stretch reads PYNQSYDQNT. Residues 1147–1163 show a composition bias toward low complexity; it reads GGSYNSSDRGSSTSGSQ. Positions 1186-1196 are enriched in pro residues; the sequence is LPPPPAHPPPH. A Phosphothreonine modification is found at Thr-1240. The segment covering 1255 to 1269 has biased composition (polar residues); sequence YSHQSTATLTPSPQE. Positions 1281 to 1293 are enriched in basic and acidic residues; sequence ETGHMQHQPDRRR. A compositionally biased stretch (pro residues) spans 1296–1307; that stretch reads VSPPPPPRPISP. At Ser-1297 the chain carries Phosphoserine. Over residues 1322–1336 the composition is skewed to acidic residues; sequence MDTDAPEEEEDEADM. Over residues 1384-1397 the composition is skewed to low complexity; the sequence is SSGRSSVSSSDGSF. Over residues 1438–1451 the composition is skewed to polar residues; sequence PRPTSPVSTDSNMS. Basic residues predominate over residues 1459–1470; sequence RPAKKLKHQPGH. Residues 1480–1490 are compositionally biased toward pro residues; that stretch reads LPPPPVPPPAI. Basic and acidic residues-rich tracts occupy residues 1516–1541 and 1549–1573; these read ARTD…RQVV and DPRE…RDLP. A compositionally biased stretch (polar residues) spans 1592–1601; it reads FPTSNNPRDP. Over residues 1602–1614 the composition is skewed to low complexity; that stretch reads SSSSSMSSRGSGS. Acidic residues predominate over residues 1642-1651; that stretch reads NNEELEETES.

Belongs to the immunoglobulin superfamily. ROBO family. As to quaternary structure, homodimer. Dimerization is mediated by the extracellular domain and is independent of SLIT liganding. Interacts with SLIT1. Interacts with SLIT2. Interacts with FLRT3. Interacts with MYO9B (via Rho-GAP domain). Post-translationally, ubiquitinated. May be deubiquitinated by USP33. As to expression, widely expressed, with exception of kidney.

The protein resides in the cell membrane. It localises to the cell projection. It is found in the axon. Its subcellular location is the endoplasmic reticulum-Golgi intermediate compartment membrane. Receptor for SLIT1 and SLIT2 that mediates cellular responses to molecular guidance cues in cellular migration, including axonal navigation at the ventral midline of the neural tube and projection of axons to different regions during neuronal development. Interaction with the intracellular domain of FLRT3 mediates axon attraction towards cells expressing NTN1. In axon growth cones, the silencing of the attractive effect of NTN1 by SLIT2 may require the formation of a ROBO1-DCC complex. Plays a role in the regulation of cell migration via its interaction with MYO9B; inhibits MYO9B-mediated stimulation of RHOA GTPase activity, and thereby leads to increased levels of active, GTP-bound RHOA. May be required for lung development. The protein is Roundabout homolog 1 (ROBO1) of Homo sapiens (Human).